The sequence spans 556 residues: Valencene synthase (556 aa).

Over residues 1–12 (MSTQVSASSLAQ) the composition is skewed to polar residues. The segment at 1–24 (MSTQVSASSLAQIPQPKNRPVANF) is disordered. 3 residues coordinate Mg(2+): Asp-310, Asp-314, and Glu-462. Positions 310–314 (DDIHD) match the DDXXD motif motif.

Belongs to the terpene synthase family. Tpsa subfamily. Requires Mg(2+) as cofactor. As to expression, expressed in flowers and anthers. Detected inside the pollen grains, but not in stems, leaves, tendrils, roots, seeds, pistils or caps.

Its subcellular location is the cytoplasm. It catalyses the reaction (2E,6E)-farnesyl diphosphate = (+)-valencene + diphosphate. The enzyme catalyses (2E,6E)-farnesyl diphosphate = (-)-7-epi-alpha-selinene + diphosphate. The protein operates within secondary metabolite biosynthesis; terpenoid biosynthesis. In terms of biological role, involved in the biosynthesis of valencene, a major volatile emitted from flowers of grapevine. Can use farnesyl diphosphate as substrate, but not geranyl diphosphate or geranylgeranyl diphosphate. Produces mainly (+)-valencene and (-)-7-epi-alpha-selinene along with five minor products. The polypeptide is Valencene synthase (ValCS) (Vitis vinifera (Grape)).